Here is a 216-residue protein sequence, read N- to C-terminus: DNA-binding protein HupB (216 aa).

Gly-2 is a propeptide (removed; alternate). Met-3 carries the post-translational modification N-acetylmethionine. The tract at residues 3–92 (MNKAELIDVL…PGAQFKAVVS (90 aa)) is bacterial histone-like domain. Lys-5, Lys-74, Lys-88, Lys-105, Lys-118, and Lys-135 each carry N6-acetyllysine. The disordered stretch occupies residues 102-216 (PAVKRGVGAS…KKATARRGRK (115 aa)). A degenerate repeats region region spans residues 103–216 (AVKRGVGASA…KKATARRGRK (114 aa)). Low complexity predominate over residues 104–114 (VKRGVGASAAK). The segment covering 115-216 (KVAKKAPAKK…KKATARRGRK (102 aa)) has biased composition (basic residues). Lys-140 is modified (N6,N6,N6-trimethyllysine). An N6-acetyllysine mark is found at Lys-148 and Lys-169.

The protein belongs to the bacterial histone-like protein family. Long actinobacterial subfamily. As to quaternary structure, oligomerizes. Interacts with topoisomerase 1 (topA). Interacts with Eis. Interacts with antigen 85 proteins (fbpA, fbpB, fbpC). Post-translationally, probably acetylated by Eis in vivo. In vitro acetylated by Eis (strain H37Rv and H37Ra) on many more residues than those identified in vivo. Deacetylated in vitro by NAD-dependent protein deacylase (Rv1151c). Trimethylated on Lys-140 by human SUV39H1; trimethylation inhibits mycobacterial growth. SUV39H1 probably also trimethylates another residue. In terms of processing, probably succinylated by Rv0802c and desuccinylated by NAD-dependent protein deacylase (Rv1151c).

The protein resides in the cytoplasm. Its subcellular location is the nucleoid. It is found in the secreted. The protein localises to the cell wall. The catalysed reaction is 4 Fe(2+) + O2 + 4 H(+) = 4 Fe(3+) + 2 H2O. Its function is as follows. A nucleoid-associated protein (NAP) that probably plays a role in chromosome compactation. Binds DNA non-specifically, with greater affinity for supercoiled than linear DNA, binds well to nicked DNA, gapped and cruciform DNA. Has a preference for A:T rich DNA. Required for activation of the mtbB operon. Binds the mtbB promoter in the presence of iron, binding is seen with as little as 25 uM Fe(2+) and increases with increasing Fe(2+). RNase E and HupB jointly contribute to cellular adaptation to changing growth conditions and survival during antibiotic treatment and in the host. Plays a role in stress survival. Stimulates supercoiling relaxation by topoisomerase 1 (Top1, topA). In terms of biological role, binds Fe(3+) but not Fe(2+). Has ferroxidase activity, converts Fe(2+) into Fe(3+) and in the presence of H(2)O(2) prevents the generation of hydroxyl radicals (the Fenton reaction). Protects DNA from damage in the presence of FeSO(4) and H(2)O(2). May function in iron storage. Involved in iron uptake by bacteria (either Fe(3+) or extracellular carboxymycobactin); antibodies against HupB block uptake of both. Following uptake iron is mostly found in the iron siderophores carboxymycobactin (CMb, extracellular) or mycobactin (Mb, lipophilic). Facilitates transfer of iron from CMb to Mb when liposomes plus a cell wall lysate are incubated with CMb. Binds iron, ferri-CMb and ferri-Mb; has 10-fold higher affinity for ferri-Mb. Suggested to transfer iron from CBm to Mb at the cell membrane. Functionally, required for biofilm formation; trimethylation by recombinant human SUV39H1 (a histone methyltransferase) inhibits biofilm formation. Induces lymphoproliferation, particularly in health tuberculin reactors, and is immunogenic. Maybe involved in pathogenesis of inflammatory bowel disease (IBD) in patients with ulcerative colitis and Crohn disease (CD). Bound by anti-neutrophil cytoplasmic antibodies (pANCA), which are a hallmark of IBD. The binding is due to pANCA directed against H1-3 cross-reacting with DBH epitopes. In CD, target of a strong IgA response. May play a role in cell wall assembly. In vitro at low levels enhances formation of TMM and TDM by antigen 85 proteins (fbpA, fbpB, fbpC), at higher levels inhibits TMM and TDM formation. This Mycobacterium tuberculosis (strain ATCC 25618 / H37Rv) protein is DNA-binding protein HupB.